A 365-amino-acid chain; its full sequence is Flagellar P-ring protein (365 aa).

The N-terminal stretch at 1–19 (MIKFLSALILLLVTTAAQA) is a signal peptide.

Belongs to the FlgI family. The basal body constitutes a major portion of the flagellar organelle and consists of four rings (L,P,S, and M) mounted on a central rod.

The protein localises to the periplasm. It is found in the bacterial flagellum basal body. Assembles around the rod to form the L-ring and probably protects the motor/basal body from shearing forces during rotation. The protein is Flagellar P-ring protein of Shigella boydii serotype 4 (strain Sb227).